We begin with the raw amino-acid sequence, 558 residues long: Membrane protein insertase YidC (558 aa).

5 helical membrane-spanning segments follow: residues 6 to 26, 359 to 379, 434 to 454, 480 to 500, and 513 to 533; these read SFFI…WDDE, FIHT…TVII, LGGC…YYML, ILPI…PTTI, and LVIF…YYII.

Belongs to the OXA1/ALB3/YidC family. Type 1 subfamily. As to quaternary structure, interacts with the Sec translocase complex via SecD. Specifically interacts with transmembrane segments of nascent integral membrane proteins during membrane integration.

Its subcellular location is the cell inner membrane. Functionally, required for the insertion and/or proper folding and/or complex formation of integral membrane proteins into the membrane. Involved in integration of membrane proteins that insert both dependently and independently of the Sec translocase complex, as well as at least some lipoproteins. Aids folding of multispanning membrane proteins. The sequence is that of Membrane protein insertase YidC from Blochmanniella floridana.